Here is a 307-residue protein sequence, read N- to C-terminus: Cytochrome f (307 aa).

The signal sequence occupies residues 1 to 24; it reads MKKNLFLVSVFASLFVGTANNALA. Heme-binding residues include Tyr-25, Cys-45, Cys-48, and His-49. Residues 273–293 traverse the membrane as a helical segment; that stretch reads LQGLVIFLGFVLIAQVFLVLK.

The protein belongs to the cytochrome f family. The 4 large subunits of the cytochrome b6-f complex are cytochrome b6, subunit IV (17 kDa polypeptide, petD), cytochrome f and the Rieske protein, while the 4 small subunits are PetG, PetL, PetM and PetN. The complex functions as a dimer. The cofactor is heme.

It localises to the plastid. Its subcellular location is the chloroplast thylakoid membrane. Component of the cytochrome b6-f complex, which mediates electron transfer between photosystem II (PSII) and photosystem I (PSI), cyclic electron flow around PSI, and state transitions. The sequence is that of Cytochrome f from Ostreococcus tauri.